A 1103-amino-acid polypeptide reads, in one-letter code: Bifunctional cytochrome P450/NADPH--P450 reductase (1103 aa).

Residues 1 to 491 (MSTPKAEPVP…SSSEHADHAA (491 aa)) are cytochrome P450. Cysteine 415 contributes to the heme binding site. The segment at 492–1103 (GHGKAGAAKK…KERYTTDIFA (612 aa)) is NADPH--P450 reductase. A Flavodoxin-like domain is found at 508–649 (MHVYYGSNTG…DFDTWGETSF (142 aa)). Residues 514-519 (SNTGTC), 561-564 (SYEG), cysteine 596, and threonine 604 each bind FMN. In terms of domain architecture, FAD-binding FR-type spans 685 to 924 (LQLQEGLVVE…RPSHTGFKPP (240 aa)).

The protein in the N-terminal section; belongs to the cytochrome P450 family. The cofactor is heme. FAD serves as cofactor. Requires FMN as cofactor.

It carries out the reaction 2 oxidized [cytochrome P450] + NADPH = 2 reduced [cytochrome P450] + NADP(+) + H(+). The catalysed reaction is an organic molecule + reduced [NADPH--hemoprotein reductase] + O2 = an alcohol + oxidized [NADPH--hemoprotein reductase] + H2O + H(+). Functionally, functions as a fatty acid monooxygenase. Also displays a NADPH-dependent reductase activity in the C-terminal domain, which allows electron transfer from NADPH to the heme iron of the cytochrome P450 N-terminal domain. In Aspergillus oryzae (strain ATCC 42149 / RIB 40) (Yellow koji mold), this protein is Bifunctional cytochrome P450/NADPH--P450 reductase.